The sequence spans 324 residues: Protein FAM228B (324 aa).

It belongs to the FAM228 family.

In Homo sapiens (Human), this protein is Protein FAM228B (FAM228B).